Reading from the N-terminus, the 339-residue chain is tRNA N6-adenosine threonylcarbamoyltransferase (339 aa).

Fe cation-binding residues include His107 and His111. Substrate contacts are provided by residues 129–133 (LVSGG), Asp162, Gly175, and Asn279. Asp307 is a binding site for Fe cation.

Belongs to the KAE1 / TsaD family. It depends on Fe(2+) as a cofactor.

The protein localises to the cytoplasm. It catalyses the reaction L-threonylcarbamoyladenylate + adenosine(37) in tRNA = N(6)-L-threonylcarbamoyladenosine(37) in tRNA + AMP + H(+). Functionally, required for the formation of a threonylcarbamoyl group on adenosine at position 37 (t(6)A37) in tRNAs that read codons beginning with adenine. Is involved in the transfer of the threonylcarbamoyl moiety of threonylcarbamoyl-AMP (TC-AMP) to the N6 group of A37, together with TsaE and TsaB. TsaD likely plays a direct catalytic role in this reaction. This chain is tRNA N6-adenosine threonylcarbamoyltransferase, found in Campylobacter curvus (strain 525.92).